The chain runs to 356 residues: D-xylulose reductase (356 aa).

Zn(2+) is bound by residues Cys-44, His-69, and Glu-155. 179–184 (GAGPIG) contacts NAD(+).

This sequence belongs to the zinc-containing alcohol dehydrogenase family. Zn(2+) serves as cofactor.

It catalyses the reaction xylitol + NAD(+) = D-xylulose + NADH + H(+). The protein operates within carbohydrate degradation; L-arabinose degradation via L-arabinitol; D-xylulose 5-phosphate from L-arabinose (fungal route): step 4/5. In Saccharomyces cerevisiae (strain ATCC 204508 / S288c) (Baker's yeast), this protein is D-xylulose reductase (XYL2).